We begin with the raw amino-acid sequence, 403 residues long: SH3 and cysteine-rich domain-containing protein (403 aa).

The tract at residues 1 to 51 (MIPPSGAREDSGDGLTGEATGTEQPPSPASTSSLESKLQKLKRSLSFKTKS) is disordered. Over residues 19 to 36 (ATGTEQPPSPASTSSLES) the composition is skewed to polar residues. Residues 39–51 (QKLKRSLSFKTKS) show a composition bias toward basic residues. The Phorbol-ester/DAG-type zinc-finger motif lies at 108–160 (LHAFQEHVFKKPTFCDVCNHMIVGTHAKHGLRCGACKMSIHHKCADGLAPQRC). The tract at residues 212-264 (QRTKKGGSGSGSDSPPRTSTSELVDVPEEADGPGDGSDMRTRSNSVFTYPENG) is disordered. A compositionally biased stretch (low complexity) spans 222-232 (GSDSPPRTSTS). 2 SH3 domains span residues 286 to 345 (LQMN…RVEE) and 348 to 403 (KIYR…LVDV).

Interacts (via SH3 domains) with CACNA1S. Interacts with CACNA1H. Interacts with CACNA1C. In terms of tissue distribution, expressed predominantly in brain Detected in brain neurons, more specifically in hippocampus, cerebellum and inferior olive. Highly expressed in urinary bladder, and detected at lower levels in adrenal gland. Detected at very low levels in heart, liver, lung and kidney.

Its subcellular location is the cytoplasm. The protein resides in the cytosol. It localises to the cell membrane. The protein localises to the sarcolemma. Its function is as follows. Promotes expression of the ion channel CACNA1H at the cell membrane, and thereby contributes to the regulation of channel activity. Plays a minor and redundant role in promoting the expression of calcium channel CACNA1S at the cell membrane, and thereby contributes to increased channel activity. Slows the rate of calcium-mediated inactivation of CACNA1C calcium channel activity. This Mus musculus (Mouse) protein is SH3 and cysteine-rich domain-containing protein.